Reading from the N-terminus, the 264-residue chain is Diphthine synthase (264 aa).

Residues L9, D84, V87, 112–113 (SI), L164, A207, and H232 each bind S-adenosyl-L-methionine.

Belongs to the diphthine synthase family. Homodimer.

The enzyme catalyses 2-[(3S)-amino-3-carboxypropyl]-L-histidyl-[translation elongation factor 2] + 3 S-adenosyl-L-methionine = diphthine-[translation elongation factor 2] + 3 S-adenosyl-L-homocysteine + 3 H(+). It participates in protein modification; peptidyl-diphthamide biosynthesis. Its function is as follows. S-adenosyl-L-methionine-dependent methyltransferase that catalyzes the trimethylation of the amino group of the modified target histidine residue in translation elongation factor 2 (EF-2), to form an intermediate called diphthine. The three successive methylation reactions represent the second step of diphthamide biosynthesis. This is Diphthine synthase from Methanothermobacter thermautotrophicus (strain ATCC 29096 / DSM 1053 / JCM 10044 / NBRC 100330 / Delta H) (Methanobacterium thermoautotrophicum).